We begin with the raw amino-acid sequence, 320 residues long: ATP-dependent 6-phosphofructokinase (320 aa).

Gly-12 serves as a coordination point for ATP. Residue 22–26 (RSVIR) coordinates ADP. Residues 73-74 (RF) and 103-106 (GDGS) contribute to the ATP site. Position 104 (Asp-104) interacts with Mg(2+). Residue 126-128 (TID) coordinates substrate. The active-site Proton acceptor is the Asp-128. Residue Arg-155 participates in ADP binding. Substrate contacts are provided by residues Arg-163 and 170–172 (MGR). Residues 186–188 (GAE) and 214–216 (KRH) each bind ADP. Residues Glu-223, Arg-244, and 250–253 (HIQR) each bind substrate.

This sequence belongs to the phosphofructokinase type A (PFKA) family. ATP-dependent PFK group I subfamily. Prokaryotic clade 'B1' sub-subfamily. In terms of assembly, homotetramer. Mg(2+) is required as a cofactor.

It is found in the cytoplasm. It carries out the reaction beta-D-fructose 6-phosphate + ATP = beta-D-fructose 1,6-bisphosphate + ADP + H(+). It participates in carbohydrate degradation; glycolysis; D-glyceraldehyde 3-phosphate and glycerone phosphate from D-glucose: step 3/4. Allosterically activated by ADP and other diphosphonucleosides, and allosterically inhibited by phosphoenolpyruvate. Functionally, catalyzes the phosphorylation of D-fructose 6-phosphate to fructose 1,6-bisphosphate by ATP, the first committing step of glycolysis. The polypeptide is ATP-dependent 6-phosphofructokinase (Tolumonas auensis (strain DSM 9187 / NBRC 110442 / TA 4)).